A 316-amino-acid chain; its full sequence is uncharacterized protein (316 aa).

An HTH lacI-type domain is found at 1 to 56 (MATLSDVAKKANVSKMTVSRVINHPETVTDELKKLVHSAMKELNYIPNYAARALVQ). The H-T-H motif DNA-binding region spans 4–23 (LSDVAKKANVSKMTVSRVIN).

This is an uncharacterized protein from Bacillus subtilis (strain 168).